The primary structure comprises 400 residues: Methylthioribose kinase (400 aa).

Residues Asn40, Lys57, and 111 to 113 (EDL) each bind ATP. Asp229 is a substrate binding site. 246 to 248 (DAE) lines the ATP pocket. Arg344 provides a ligand contact to substrate.

Belongs to the methylthioribose kinase family. Homodimer.

It carries out the reaction 5-(methylsulfanyl)-D-ribose + ATP = 5-(methylsulfanyl)-alpha-D-ribose 1-phosphate + ADP + H(+). Its pathway is amino-acid biosynthesis; L-methionine biosynthesis via salvage pathway; S-methyl-5-thio-alpha-D-ribose 1-phosphate from S-methyl-5'-thioadenosine (hydrolase route): step 2/2. In terms of biological role, catalyzes the phosphorylation of methylthioribose into methylthioribose-1-phosphate. This chain is Methylthioribose kinase, found in Pectobacterium carotovorum subsp. carotovorum (strain PC1).